Consider the following 559-residue polypeptide: Oxygen-dependent choline dehydrogenase (559 aa).

FAD is bound at residue 4–33 (DYIIIGAGSAGNVLATRLTEESDVSVLLLE). A disordered region spans residues 182-201 (EGFGPMDRTVTPKGRRASTA). Residue histidine 471 is the Proton acceptor of the active site.

It belongs to the GMC oxidoreductase family. FAD serves as cofactor.

The catalysed reaction is choline + A = betaine aldehyde + AH2. The enzyme catalyses betaine aldehyde + NAD(+) + H2O = glycine betaine + NADH + 2 H(+). The protein operates within amine and polyamine biosynthesis; betaine biosynthesis via choline pathway; betaine aldehyde from choline (cytochrome c reductase route): step 1/1. Involved in the biosynthesis of the osmoprotectant glycine betaine. Catalyzes the oxidation of choline to betaine aldehyde and betaine aldehyde to glycine betaine at the same rate. The chain is Oxygen-dependent choline dehydrogenase from Pectobacterium carotovorum subsp. carotovorum (strain PC1).